The following is a 564-amino-acid chain: Ubiquitin carboxyl-terminal hydrolase 39 (564 aa).

The segment at 1-96 is disordered; that stretch reads MSSRSKRQSH…VRAKNGRVDS (96 aa). The span at 28–39 shows a compositional bias: basic and acidic residues; that stretch reads IKKERDREKEPE. Ser-46 is subject to Phosphoserine. Lys-51 participates in a covalent cross-link: Glycyl lysine isopeptide (Lys-Gly) (interchain with G-Cter in SUMO2). The span at 59 to 69 shows a compositional bias: low complexity; sequence REVPAPALPVV. Residue Ser-81 is modified to Phosphoserine. Basic and acidic residues predominate over residues 84–96; sequence EREVRAKNGRVDS. The UBP-type; degenerate zinc finger occupies 102-199; the sequence is RHCPYLDTIN…YVLKPTFTKQ (98 aa). Positions 135, 138, 154, and 160 each coordinate Zn(2+). The region spanning 224-554 is the USP domain; that stretch reads VGLNNIKAND…EAYIQIWKRR (331 aa).

The protein belongs to the peptidase C19 family. The U4/U6-U5 tri-snRNP complex is a building block of the precatalytic spliceosome (spliceosome B complex). Component of the U4/U6-U5 tri-snRNP complex composed of the U4, U6 and U5 snRNAs and at least PRPF3, PRPF4, PRPF6, PRPF8, PRPF31, SNRNP200, TXNL4A, SNRNP40, SNRPB, SNRPD1, SNRPD2, SNRPD3, SNRPE, SNRPF, SNRPG, DDX23, CD2BP2, PPIH, SNU13, EFTUD2, SART1 and USP39, plus LSM2, LSM3, LSM4, LSM5, LSM6, LSM7 and LSM8.

The protein localises to the nucleus. The catalysed reaction is Thiol-dependent hydrolysis of ester, thioester, amide, peptide and isopeptide bonds formed by the C-terminal Gly of ubiquitin (a 76-residue protein attached to proteins as an intracellular targeting signal).. Its function is as follows. Deubiquitinating enzyme that plays a role in many cellular processes including cellular antiviral response, epithelial morphogenesis, DNA repair or B-cell development. Plays a role in pre-mRNA splicing as a component of the U4/U6-U5 tri-snRNP, one of the building blocks of the precatalytic spliceosome. Specifically regulates immunoglobulin gene rearrangement in a spliceosome-dependent manner, which involves modulating chromatin interactions at the Igh locus and therefore plays an essential role in B-cell development. Regulates AURKB mRNA levels, and thereby plays a role in cytokinesis and in the spindle checkpoint. Regulates apoptosis and G2/M cell cycle checkpoint in response to DNA damage by deubiquitinating and stabilizing CHK2. Also plays an important role in DNA repair by controlling the recruitment of XRCC4/LIG4 to DNA double-strand breaks for non-homologous end-joining repair. Participates in antiviral activity by affecting the type I IFN signaling by stabilizing STAT1 and decreasing its 'Lys-6'-linked ubiquitination. Contributes to non-canonical Wnt signaling during epidermal differentiation. Acts as a negative regulator NF-kappa-B activation through deubiquitination of 'Lys-48'-linked ubiquitination of NFKBIA. This chain is Ubiquitin carboxyl-terminal hydrolase 39, found in Mus musculus (Mouse).